The following is a 288-amino-acid chain: Polyprenyl transferase eriF (288 aa).

A run of 6 helical transmembrane segments spans residues 24 to 44, 51 to 71, 101 to 121, 145 to 165, 215 to 235, and 268 to 288; these read ASII…TLPL, YIFL…LNQV, IAAF…LPET, CIAM…AISP, FIIT…GGIF, and FYTY…HGLI.

The protein belongs to the UbiA prenyltransferase family. Mg(2+) is required as a cofactor.

The protein localises to the membrane. Functionally, polyprenyl transferase; part of the gene cluster that mediates the biosynthesis of erinacines, cyathane-xylosides that show unique biological activities, including leishmanicidal activity, stimulating activity for nerve growth-factor synthesis, and agonistic activity toward the kappa opioid receptor. The role of eriF within the pathway has still to be determined. The first step of the erinacines biosynthesis pathway is catalyzed by the geranylgeranyl diphosphate (GGPP) synthase eriE via conversion of farnesyl pyrophosphate and isopentyl pyrophosphate into geranylgeranyl pyrophosphate (GGPP). GGPP is then substrate of the diterpene cyclase eriG for the production of cyatha-3,12-diene. The cytochrome P450 monooxygenase eriI then hydroxylates cyatha-3,12-diene at C-14 of the seven-membered ring to produce erinacol, which is further hydroxylated at C-15 by the cytochrome P450 monooxygenase eriC to yield cyathadiol. The cytochrome P450 monooxygenase eriA then catalyzes C-11 hydroxylation in the presence of the short chain dehydrogenase/reductase (SDR) eriH, which leads to the production of cyathatriol. The acetyltransferase eriL converts cyathatriol into 11-O-acetyl-cyathatriol. The SDR eriH catalyzes further oxidation of 11-O-acetyl-cyathatriol into 1-O-acetylcyathin A3. Finally, the glycosyl transferase eriJ tranfers xylose from UDP-xylose onto C-14 of 11-O-acetyl-cyathatriol to form eracine Q. EriJ is also able to convert 11-O-acetyl-cyathatriol to eracine Q2 by using UDP-D-glucose as cosubstrate, but at a lower rate. This Hericium erinaceus (Lion's mane mushroom) protein is Polyprenyl transferase eriF.